Here is a 265-residue protein sequence, read N- to C-terminus: MNYSNNYIEHQNKKKTIIIFFRQFKKQKPMLRMGVHLVVINKNTFNFFNRQNNYFNSGKTKKIFVIDRFLAVHQIVRKKLQLVGVTALLLACKYEEVSVPVVDDLILISDKAYSRREVLDMEKLMANTLQFNFSLPTPYVFMKRFLKAAQSDKKLEILSFFMIELCLVEYEMLEYLPSKLAASAIYTAQCTLKGFEEWSKTCEFHTGYNEEQLLACARKMVAFHHKAGTGKLTGSTTHLSSFMLQEVNQLGFCFKGGKNYNKNLI.

It belongs to the cyclin family. Cyclin AB subfamily.

The polypeptide is Cyclin-B2-5 (CYCB2-5) (Arabidopsis thaliana (Mouse-ear cress)).